The primary structure comprises 119 residues: UPF0342 protein GTNG_0551 (119 aa).

This sequence belongs to the UPF0342 family.

This Geobacillus thermodenitrificans (strain NG80-2) protein is UPF0342 protein GTNG_0551.